A 124-amino-acid polypeptide reads, in one-letter code: Small ribosomal subunit protein uS12 (124 aa).

Aspartate 89 carries the post-translational modification 3-methylthioaspartic acid. The tract at residues leucine 102 to serine 124 is disordered. A compositionally biased stretch (basic residues) spans asparagine 109–serine 124.

Belongs to the universal ribosomal protein uS12 family. In terms of assembly, part of the 30S ribosomal subunit. Contacts proteins S8 and S17. May interact with IF1 in the 30S initiation complex.

In terms of biological role, with S4 and S5 plays an important role in translational accuracy. Interacts with and stabilizes bases of the 16S rRNA that are involved in tRNA selection in the A site and with the mRNA backbone. Located at the interface of the 30S and 50S subunits, it traverses the body of the 30S subunit contacting proteins on the other side and probably holding the rRNA structure together. The combined cluster of proteins S8, S12 and S17 appears to hold together the shoulder and platform of the 30S subunit. The protein is Small ribosomal subunit protein uS12 of Francisella tularensis subsp. tularensis (strain FSC 198).